Reading from the N-terminus, the 210-residue chain is Thymidylate kinase (210 aa).

16 to 23 lines the ATP pocket; that stretch reads GGDGVGKS.

The protein belongs to the thymidylate kinase family.

It catalyses the reaction dTMP + ATP = dTDP + ADP. Its function is as follows. Phosphorylation of dTMP to form dTDP in both de novo and salvage pathways of dTTP synthesis. This chain is Thymidylate kinase, found in Leifsonia xyli subsp. xyli (strain CTCB07).